A 266-amino-acid chain; its full sequence is 15-hydroxyprostaglandin dehydrogenase [NAD(+)] (266 aa).

Residues 12–20 (GAAQGIGRA), 36–37 (DW), 63–65 (CDV), and N91 contribute to the NAD(+) site. Substrate contacts are provided by S138 and Q148. Y151 serves as the catalytic Proton acceptor. NAD(+) contacts are provided by residues 151–155 (YCASK) and 186–188 (VNT).

It belongs to the short-chain dehydrogenases/reductases (SDR) family. As to quaternary structure, homodimer. In terms of tissue distribution, detected in colon epithelium (at protein level).

The protein resides in the cytoplasm. The catalysed reaction is prostaglandin E2 + NAD(+) = 15-oxoprostaglandin E2 + NADH + H(+). It carries out the reaction (15S)-hydroxy-(5Z,8Z,11Z,13E)-eicosatetraenoate + NAD(+) = 15-oxo-(5Z,8Z,11Z,13E)-eicosatetraenoate + NADH + H(+). It catalyses the reaction (11R)-hydroxy-(5Z,8Z,12E,14Z)-eicosatetraenoate + NAD(+) = 11-oxo-(5Z,8Z,12E,14Z)-eicosatetraenoate + NADH + H(+). The enzyme catalyses lipoxin A4 + NAD(+) = 15-oxo-(5S,6R)-dihydroxy-(7E,9E,11Z,13E)-eicosatetraenoate + NADH + H(+). The catalysed reaction is 15-oxo-(5S,6R)-dihydroxy-(7E,9E,11Z)-eicosatrienoate + NADH + H(+) = (5S,6R,15S)-trihydroxy-(7E,9E,11Z)-eicosatrienoate + NAD(+). It carries out the reaction prostaglandin A1 + NAD(+) = 15-oxo-prostaglandin A1 + NADH + H(+). It catalyses the reaction prostaglandin E1 + NAD(+) = 15-oxoprostaglandin E1 + NADH + H(+). The enzyme catalyses 14-hydroxy-(4Z,7Z,10Z,12E,16Z,19Z)-docosahexaenoate + NAD(+) = 14-oxo-(4Z,7Z,10Z,12E,16Z,19Z)-docosahexaenoate + NADH + H(+). The catalysed reaction is resolvin E1 + NAD(+) = 18-oxo-resolvin E1 + NADH + H(+). It carries out the reaction resolvin D1 + NAD(+) = 8-oxoresolvin D1 + NADH + H(+). It catalyses the reaction resolvin D1 + NAD(+) = 17-oxoresolvin D1 + NADH + H(+). The enzyme catalyses resolvin D2 + NAD(+) = 7-oxoresolvin D2 + NADH + H(+). The catalysed reaction is resolvin D2 + NAD(+) = 16-oxoresolvin D2 + NADH + H(+). In terms of biological role, catalyzes the NAD-dependent dehydrogenation (oxidation) of a broad array of hydroxylated polyunsaturated fatty acids (mainly eicosanoids and docosanoids, including prostaglandins, lipoxins and resolvins), yielding their corresponding keto (oxo) metabolites. Decreases the levels of the pro-proliferative prostaglandins such as prostaglandin E2 (whose activity is increased in cancer because of an increase in the expression of cyclooxygenase 2) and generates oxo-fatty acid products that can profoundly influence cell function by abrogating pro-inflammatory cytokine expression. Converts resolvins E1, D1 and D2 to their oxo products, which represents a mode of resolvin inactivation. Resolvin E1 plays important roles during the resolution phase of acute inflammation, while resolvins D1 and D2 have a unique role in obesity-induced adipose inflammation. This Homo sapiens (Human) protein is 15-hydroxyprostaglandin dehydrogenase [NAD(+)].